The following is a 365-amino-acid chain: Pre-mRNA-splicing factor srp2 (365 aa).

2 RRM domains span residues L6–V69 and L100–L166. The segment at L166–W365 is disordered. Residues F184–R194 show a composition bias toward basic residues. 7 positions are modified to phosphoserine: S186, S188, S276, S294, S296, S298, and S308. Residues Y195 to R307 show a composition bias toward basic and acidic residues. Residues S316 to E332 show a composition bias toward low complexity. Over residues E341–G353 the composition is skewed to polar residues.

The protein belongs to the splicing factor SR family. In terms of processing, extensively phosphorylated on serine residues in the RS domain.

It is found in the nucleus. Functionally, has a role in pre-mRNA splicing where it is involved in spliceosome assembly. The sequence is that of Pre-mRNA-splicing factor srp2 (srp2) from Schizosaccharomyces pombe (strain 972 / ATCC 24843) (Fission yeast).